A 271-amino-acid polypeptide reads, in one-letter code: 3-methyl-2-oxobutanoate hydroxymethyltransferase (271 aa).

Aspartate 51 and aspartate 90 together coordinate Mg(2+). Residues 51-52 (DS), aspartate 90, and lysine 119 each bind 3-methyl-2-oxobutanoate. A Mg(2+)-binding site is contributed by glutamate 121. The active-site Proton acceptor is glutamate 188.

This sequence belongs to the PanB family. As to quaternary structure, homodecamer; pentamer of dimers. Requires Mg(2+) as cofactor.

The protein localises to the cytoplasm. It catalyses the reaction 3-methyl-2-oxobutanoate + (6R)-5,10-methylene-5,6,7,8-tetrahydrofolate + H2O = 2-dehydropantoate + (6S)-5,6,7,8-tetrahydrofolate. It participates in cofactor biosynthesis; (R)-pantothenate biosynthesis; (R)-pantoate from 3-methyl-2-oxobutanoate: step 1/2. Functionally, catalyzes the reversible reaction in which hydroxymethyl group from 5,10-methylenetetrahydrofolate is transferred onto alpha-ketoisovalerate to form ketopantoate. The protein is 3-methyl-2-oxobutanoate hydroxymethyltransferase of Aromatoleum aromaticum (strain DSM 19018 / LMG 30748 / EbN1) (Azoarcus sp. (strain EbN1)).